A 235-amino-acid chain; its full sequence is Small ribosomal subunit protein eS4 (235 aa).

The S4 RNA-binding domain maps to Val38–Asn99.

Belongs to the eukaryotic ribosomal protein eS4 family.

The polypeptide is Small ribosomal subunit protein eS4 (rps4e) (Thermoplasma volcanium (strain ATCC 51530 / DSM 4299 / JCM 9571 / NBRC 15438 / GSS1)).